The sequence spans 132 residues: Small ribosomal subunit protein uS11 (132 aa).

This sequence belongs to the universal ribosomal protein uS11 family. Part of the 30S ribosomal subunit. Interacts with proteins S7 and S18. Binds to IF-3.

Its function is as follows. Located on the platform of the 30S subunit, it bridges several disparate RNA helices of the 16S rRNA. Forms part of the Shine-Dalgarno cleft in the 70S ribosome. The sequence is that of Small ribosomal subunit protein uS11 from Clostridium kluyveri (strain NBRC 12016).